The following is a 105-amino-acid chain: Large ribosomal subunit protein uL24 (105 aa).

This sequence belongs to the universal ribosomal protein uL24 family. Part of the 50S ribosomal subunit.

One of two assembly initiator proteins, it binds directly to the 5'-end of the 23S rRNA, where it nucleates assembly of the 50S subunit. Its function is as follows. One of the proteins that surrounds the polypeptide exit tunnel on the outside of the subunit. The polypeptide is Large ribosomal subunit protein uL24 (Cellvibrio japonicus (strain Ueda107) (Pseudomonas fluorescens subsp. cellulosa)).